A 1014-amino-acid polypeptide reads, in one-letter code: Beta-galactosidase (1014 aa).

Glu-460 functions as the Proton donor in the catalytic mechanism. Glu-527 (nucleophile) is an active-site residue.

The protein belongs to the glycosyl hydrolase 2 family.

It catalyses the reaction Hydrolysis of terminal non-reducing beta-D-galactose residues in beta-D-galactosides.. This is Beta-galactosidase (lacZ) from Halalkalibacterium halodurans (strain ATCC BAA-125 / DSM 18197 / FERM 7344 / JCM 9153 / C-125) (Bacillus halodurans).